A 140-amino-acid chain; its full sequence is Large ribosomal subunit protein uL11 (140 aa).

Belongs to the universal ribosomal protein uL11 family. In terms of assembly, part of the ribosomal stalk of the 50S ribosomal subunit. Interacts with L10 and the large rRNA to form the base of the stalk. L10 forms an elongated spine to which L12 dimers bind in a sequential fashion forming a multimeric L10(L12)X complex. In terms of processing, one or more lysine residues are methylated.

In terms of biological role, forms part of the ribosomal stalk which helps the ribosome interact with GTP-bound translation factors. This Campylobacter hominis (strain ATCC BAA-381 / DSM 21671 / CCUG 45161 / LMG 19568 / NCTC 13146 / CH001A) protein is Large ribosomal subunit protein uL11.